Here is a 206-residue protein sequence, read N- to C-terminus: Protein FAM228A (206 aa).

The protein belongs to the FAM228 family.

This is Protein FAM228A (FAM228A) from Homo sapiens (Human).